Consider the following 654-residue polypeptide: tRNA 5-methylaminomethyl-2-thiouridine biosynthesis bifunctional protein MnmC (654 aa).

Positions Met-1–Val-236 are tRNA (mnm(5)s(2)U34)-methyltransferase. Residues Ile-262–Lys-654 form an FAD-dependent cmnm(5)s(2)U34 oxidoreductase region.

The protein in the N-terminal section; belongs to the methyltransferase superfamily. tRNA (mnm(5)s(2)U34)-methyltransferase family. It in the C-terminal section; belongs to the DAO family. FAD serves as cofactor.

The protein resides in the cytoplasm. It catalyses the reaction 5-aminomethyl-2-thiouridine(34) in tRNA + S-adenosyl-L-methionine = 5-methylaminomethyl-2-thiouridine(34) in tRNA + S-adenosyl-L-homocysteine + H(+). Catalyzes the last two steps in the biosynthesis of 5-methylaminomethyl-2-thiouridine (mnm(5)s(2)U) at the wobble position (U34) in tRNA. Catalyzes the FAD-dependent demodification of cmnm(5)s(2)U34 to nm(5)s(2)U34, followed by the transfer of a methyl group from S-adenosyl-L-methionine to nm(5)s(2)U34, to form mnm(5)s(2)U34. The chain is tRNA 5-methylaminomethyl-2-thiouridine biosynthesis bifunctional protein MnmC from Pseudomonas putida (strain ATCC 47054 / DSM 6125 / CFBP 8728 / NCIMB 11950 / KT2440).